Reading from the N-terminus, the 261-residue chain is UPF0246 protein Vapar_1301 (261 aa).

Belongs to the UPF0246 family.

The polypeptide is UPF0246 protein Vapar_1301 (Variovorax paradoxus (strain S110)).